The following is a 687-amino-acid chain: Homeobox-leucine zipper protein HDG12 (687 aa).

The segment at 1–32 (MEFLGDSQNHDSSETEKKNKKKKRFHRHTPHQ) is disordered. The segment covering 8-17 (QNHDSSETEK) has biased composition (basic and acidic residues). A compositionally biased stretch (basic residues) spans 18–30 (KNKKKKRFHRHTP). Positions 21-80 (KKKRFHRHTPHQIQRLESTFNECQHPDEKQRNQLSRELGLAPRQIKFWFQNRRTQKKAQH) form a DNA-binding region, homeobox. The stretch at 87–150 (ALKEENDKIR…LERVSSIAAK (64 aa)) forms a coiled coil. The START domain maps to 206-440 (SEMDKSLMTN…LQRMCERFTN (235 aa)).

It belongs to the HD-ZIP homeobox family. Class IV subfamily. Interacts with BBM. In terms of tissue distribution, expressed in apical meristems and young epidermal tissue including trichomes and stipules. Expressed in lateral root tips, the L1 layer of apical inflorescence meristems and early flower primordia, carpel and stamen filament epidermis, stigma papillae, ovule primordia, nucellus and embryo.

It localises to the nucleus. Functionally, probable transcription factor that acts as a negative regulator of trichome branching in association with HDG11. Seems to promote cell differentiation. May regulate cell differentiation and proliferation during root and shoot meristem development. Acts as a positive regulator of SCL18/LAS expression. Involved, together with PDF2, in the regulation of flower organs development by promoting the expression of APETALA 3 (AP3) in the epidermis and internal cell layers of developing flowers. The sequence is that of Homeobox-leucine zipper protein HDG12 from Arabidopsis thaliana (Mouse-ear cress).